The chain runs to 189 residues: Peptidyl-tRNA hydrolase (189 aa).

Position 14 (Y14) interacts with tRNA. The Proton acceptor role is filled by H19. TRNA contacts are provided by Y64, N66, and N112.

This sequence belongs to the PTH family. In terms of assembly, monomer.

Its subcellular location is the cytoplasm. The catalysed reaction is an N-acyl-L-alpha-aminoacyl-tRNA + H2O = an N-acyl-L-amino acid + a tRNA + H(+). Hydrolyzes ribosome-free peptidyl-tRNAs (with 1 or more amino acids incorporated), which drop off the ribosome during protein synthesis, or as a result of ribosome stalling. Functionally, catalyzes the release of premature peptidyl moieties from peptidyl-tRNA molecules trapped in stalled 50S ribosomal subunits, and thus maintains levels of free tRNAs and 50S ribosomes. This is Peptidyl-tRNA hydrolase from Dehalococcoides mccartyi (strain ATCC BAA-2100 / JCM 16839 / KCTC 5957 / BAV1).